A 361-amino-acid polypeptide reads, in one-letter code: tRNA-specific 2-thiouridylase MnmA (361 aa).

Residues 11–18 and M37 contribute to the ATP site; that span reads GMSGGVDS. The active-site Nucleophile is the C106. An intrachain disulfide couples C106 to C202. G130 provides a ligand contact to ATP. Residues 152–154 form an interaction with tRNA region; sequence KDQ. C202 (cysteine persulfide intermediate) is an active-site residue. An interaction with tRNA region spans residues 308 to 309; that stretch reads RY.

Belongs to the MnmA/TRMU family.

The protein localises to the cytoplasm. It carries out the reaction S-sulfanyl-L-cysteinyl-[protein] + uridine(34) in tRNA + AH2 + ATP = 2-thiouridine(34) in tRNA + L-cysteinyl-[protein] + A + AMP + diphosphate + H(+). Its function is as follows. Catalyzes the 2-thiolation of uridine at the wobble position (U34) of tRNA, leading to the formation of s(2)U34. The polypeptide is tRNA-specific 2-thiouridylase MnmA (Clostridium botulinum (strain Eklund 17B / Type B)).